A 330-amino-acid polypeptide reads, in one-letter code: 5-dehydro-2-deoxygluconokinase (330 aa).

This sequence belongs to the carbohydrate kinase PfkB family.

It catalyses the reaction 5-dehydro-2-deoxy-D-gluconate + ATP = 6-phospho-5-dehydro-2-deoxy-D-gluconate + ADP + H(+). It participates in polyol metabolism; myo-inositol degradation into acetyl-CoA; acetyl-CoA from myo-inositol: step 5/7. In terms of biological role, catalyzes the phosphorylation of 5-dehydro-2-deoxy-D-gluconate (2-deoxy-5-keto-D-gluconate or DKG) to 6-phospho-5-dehydro-2-deoxy-D-gluconate (DKGP). In Bacillus velezensis (strain DSM 23117 / BGSC 10A6 / LMG 26770 / FZB42) (Bacillus amyloliquefaciens subsp. plantarum), this protein is 5-dehydro-2-deoxygluconokinase.